The chain runs to 86 residues: Large ribosomal subunit protein eL43 (86 aa).

Residues 38–59 (CPVCGRKAVRRISTGIWQCQKC) form a C4-type zinc finger.

The protein belongs to the eukaryotic ribosomal protein eL43 family. Zn(2+) is required as a cofactor.

The protein is Large ribosomal subunit protein eL43 of Thermococcus gammatolerans (strain DSM 15229 / JCM 11827 / EJ3).